The primary structure comprises 898 residues: Inner centromere protein (898 aa).

8 disordered regions span residues 50 to 127, 251 to 282, 358 to 379, 406 to 470, 525 to 548, 564 to 677, 707 to 770, and 802 to 824; these read AEPE…TRAR, PANE…SVRR, ETAP…RRSL, MVAM…PPPH, KEEA…EELK, RVEQ…RQRE, ERAA…PVMN, and NYGM…KPIP. Residues 60-69 show a composition bias toward basic residues; that stretch reads SQKRRRKKRT. Low complexity predominate over residues 90-99; it reads SANWSNSVRR. Residues 259–272 show a composition bias toward polar residues; it reads QPLNLTNQSVTPTG. Basic and acidic residues-rich tracts occupy residues 367–376 and 431–449; these read EEAHTIESPR and RAVD…ERSP. Residues 455-470 show a composition bias toward pro residues; it reads PSPPCPPSKIVKPPPH. Residues 512–730 form an SAH region; it reads KEKERQRLDA…EERKKREQQE (219 aa). 3 stretches are compositionally biased toward basic and acidic residues: residues 564–600, 607–677, and 707–759; these read RVEQ…EEKA, KKQE…RQRE, and ERAA…KAKE. Residues 807 to 881 form an IN box region; it reads LNSDDSTDDE…RTSSAVWHSP (75 aa). Phosphoserine occurs at positions 874 and 875.

This sequence belongs to the INCENP family. Component of the CPC at least composed of survivin/birc5, incenp, cdca8/borealin and/or cdca9/dasra-A, and aurkb/aurora-B. Interacts (via C-terminus) with aurkb (via N-terminus and kinase domain). Interacts (via N-terminus) with birc5.1, birc5.2, cdca8 and cdca9. Interacts with mtus1.

It is found in the nucleus. The protein resides in the chromosome. The protein localises to the centromere. It localises to the cytoplasm. Its subcellular location is the cytoskeleton. It is found in the spindle. The protein resides in the midbody. The protein localises to the kinetochore. In terms of biological role, component of the chromosomal passenger complex (CPC), a complex that acts as a key regulator of mitosis. The CPC complex has essential functions at the centromere in ensuring correct chromosome alignment and segregation and is required for chromatin-induced microtubule stabilization and spindle assembly. Acts as a scaffold regulating CPC localization and activity. The C-terminus associates with aurkb/aurora-B, the N-terminus associated with cdca8/borealin and/or cdca9/dasra-A tethers the CPC to the inner centromere, and the microtubule binding activity within the central SAH domain directs aurkb/aurora-B toward substrates near microtubules. Activates aurkb. This Xenopus tropicalis (Western clawed frog) protein is Inner centromere protein (incenp).